We begin with the raw amino-acid sequence, 180 residues long: uncharacterized protein (180 aa).

The disordered stretch occupies residues serine 138–glutamate 180. Residues proline 145–threonine 154 are compositionally biased toward polar residues. Residues aspartate 159–asparagine 169 show a composition bias toward basic and acidic residues.

This is an uncharacterized protein from Acidianus filamentous virus 2 (isolate Italy/Pozzuoli) (AFV-2).